The chain runs to 204 residues: Ribosomal RNA small subunit methyltransferase G (204 aa).

Residues G69, F74, 123–124, and R137 contribute to the S-adenosyl-L-methionine site; that span reads IE.

The protein belongs to the methyltransferase superfamily. RNA methyltransferase RsmG family.

The protein resides in the cytoplasm. It carries out the reaction guanosine(527) in 16S rRNA + S-adenosyl-L-methionine = N(7)-methylguanosine(527) in 16S rRNA + S-adenosyl-L-homocysteine. Its function is as follows. Specifically methylates the N7 position of guanine in position 527 of 16S rRNA. This Ruegeria pomeroyi (strain ATCC 700808 / DSM 15171 / DSS-3) (Silicibacter pomeroyi) protein is Ribosomal RNA small subunit methyltransferase G.